The following is a 556-amino-acid chain: Membrane protein insertase YidC (556 aa).

The chain crosses the membrane as a helical span at residues 5–25 (TLTAIVLSFVLLTAFQFYMAW). Residues 36–74 (QVQSGESSAPAPLASTAPVADALPPPVEGMAGSAPQQAM) are disordered. The span at 42-55 (SSAPAPLASTAPVA) shows a compositional bias: low complexity. The next 4 helical transmembrane spans lie at 370-390 (NYGV…FPLA), 441-461 (LPIL…FLSV), 468-488 (FMLW…PLLM), and 510-530 (IMMF…SGLV).

The protein belongs to the OXA1/ALB3/YidC family. Type 1 subfamily. As to quaternary structure, interacts with the Sec translocase complex via SecD. Specifically interacts with transmembrane segments of nascent integral membrane proteins during membrane integration.

The protein resides in the cell inner membrane. Its function is as follows. Required for the insertion and/or proper folding and/or complex formation of integral membrane proteins into the membrane. Involved in integration of membrane proteins that insert both dependently and independently of the Sec translocase complex, as well as at least some lipoproteins. Aids folding of multispanning membrane proteins. The polypeptide is Membrane protein insertase YidC (Magnetococcus marinus (strain ATCC BAA-1437 / JCM 17883 / MC-1)).